A 445-amino-acid polypeptide reads, in one-letter code: 3-phosphoshikimate 1-carboxyvinyltransferase (445 aa).

Residues 1–24 (MEHAATLPQTSRRPATPLTGTITV) are disordered. Over residues 7–22 (LPQTSRRPATPLTGTI) the composition is skewed to polar residues. Lysine 28, serine 29, and arginine 33 together coordinate 3-phosphoshikimate. Lysine 28 serves as a coordination point for phosphoenolpyruvate. Residues glycine 101 and arginine 129 each coordinate phosphoenolpyruvate. Residues serine 174, glutamine 176, aspartate 326, and lysine 353 each coordinate 3-phosphoshikimate. Glutamine 176 contacts phosphoenolpyruvate. Aspartate 326 functions as the Proton acceptor in the catalytic mechanism. Residues arginine 357 and arginine 399 each contribute to the phosphoenolpyruvate site.

Belongs to the EPSP synthase family. Monomer.

The protein localises to the cytoplasm. It catalyses the reaction 3-phosphoshikimate + phosphoenolpyruvate = 5-O-(1-carboxyvinyl)-3-phosphoshikimate + phosphate. Its pathway is metabolic intermediate biosynthesis; chorismate biosynthesis; chorismate from D-erythrose 4-phosphate and phosphoenolpyruvate: step 6/7. Functionally, catalyzes the transfer of the enolpyruvyl moiety of phosphoenolpyruvate (PEP) to the 5-hydroxyl of shikimate-3-phosphate (S3P) to produce enolpyruvyl shikimate-3-phosphate and inorganic phosphate. The sequence is that of 3-phosphoshikimate 1-carboxyvinyltransferase from Acidiphilium cryptum (strain JF-5).